We begin with the raw amino-acid sequence, 340 residues long: Chitinase 7 (340 aa).

The N-terminal stretch at 1 to 32 is a signal peptide; sequence MIAARAANLQVAMKALALAVLALAYAAATARA. One can recognise a Chitin-binding type-1 domain in the interval 33–73; that stretch reads EQCGRQAGGARCPNRLCCSRWGWCGLTDDYCKGGCQSQCRV. Disulfide bonds link cysteine 35–cysteine 50, cysteine 44–cysteine 56, cysteine 49–cysteine 63, cysteine 67–cysteine 71, cysteine 118–cysteine 173, cysteine 185–cysteine 193, and cysteine 293–cysteine 323.

The protein belongs to the glycosyl hydrolase 19 family. Chitinase class I subfamily. As to expression, expressed in pistils, stamens and lodicules.

The catalysed reaction is Random endo-hydrolysis of N-acetyl-beta-D-glucosaminide (1-&gt;4)-beta-linkages in chitin and chitodextrins.. Hydrolyzes chitin and may play a role in defense against fungal pathogens containing chitin. The protein is Chitinase 7 (Cht7) of Oryza sativa subsp. indica (Rice).